We begin with the raw amino-acid sequence, 412 residues long: Maltoporin (412 aa).

Positions 1–22 (MKKVSVIAAAVAATLAAGSAFA) are cleaved as a signal peptide.

The protein belongs to the porin LamB (TC 1.B.3) family. Homotrimer formed of three 18-stranded antiparallel beta-barrels, containing three independent channels.

Its subcellular location is the cell outer membrane. It catalyses the reaction beta-maltose(in) = beta-maltose(out). In terms of biological role, involved in the transport of maltose and maltodextrins. The protein is Maltoporin of Vibrio cholerae serotype O1 (strain ATCC 39315 / El Tor Inaba N16961).